The following is a 237-amino-acid chain: 1-(5-phosphoribosyl)-5-[(5-phosphoribosylamino)methylideneamino] imidazole-4-carboxamide isomerase (237 aa).

Catalysis depends on Asp-8, which acts as the Proton acceptor. Asp-129 (proton donor) is an active-site residue.

It belongs to the HisA/HisF family.

The protein localises to the cytoplasm. The catalysed reaction is 1-(5-phospho-beta-D-ribosyl)-5-[(5-phospho-beta-D-ribosylamino)methylideneamino]imidazole-4-carboxamide = 5-[(5-phospho-1-deoxy-D-ribulos-1-ylimino)methylamino]-1-(5-phospho-beta-D-ribosyl)imidazole-4-carboxamide. Its pathway is amino-acid biosynthesis; L-histidine biosynthesis; L-histidine from 5-phospho-alpha-D-ribose 1-diphosphate: step 4/9. The protein is 1-(5-phosphoribosyl)-5-[(5-phosphoribosylamino)methylideneamino] imidazole-4-carboxamide isomerase of Clostridium botulinum (strain Alaska E43 / Type E3).